The chain runs to 304 residues: Non-specific ribonucleoside hydrolase RihC (304 aa).

Histidine 233 is a catalytic residue.

The protein belongs to the IUNH family. RihC subfamily.

Hydrolyzes both purine and pyrimidine ribonucleosides with a broad-substrate specificity. This Klebsiella pneumoniae (strain 342) protein is Non-specific ribonucleoside hydrolase RihC.